Reading from the N-terminus, the 507-residue chain is MASYSVTVSVAGTSINKYPAGSAGFDLAMADSYDPGKQHARRVAAYLPKQQGLIYLPGQQTVLSEDSDQDRPFKQRRYFFYVTGVVEPDCHVTYDIAEDKLTLYVPDFDFKRTIWTGPTLGKDEANQRYDVDRVEYFSALEGDVLRWSQANPSLSIYILHPDQRPVTPLTVAYFYESKSLKHAMDACRVIKDEHEIQLIQRANRVSGAAHRSILANLHHFKNEAQIAGLFIDVCLSLRSKGTAYQTIAGSGSNGATLHYTRNNEPLAGRQMVVLDAGAEWSCYASDVTRSFPIPSSVSGGRDWPSREAEQIYAIVQRMQEECISRVKEGALFFSIHQHAHAIALEELLKLGILRIPQGSTKADLIKAEVTALFFPHGLGHHLGLEVHDVSPDSGTIPVELAIEREKGLMSVTEHRPPCTLSAPPLASGMVITVEPGLYFNRLAIDQARAERDEPNSKGRFVNFDVVERYVDVGGVRIEDDVLVTKDGNKNLTDAPKGKEMLDLIYGR.

Mn(2+) contacts are provided by Asp275, Asp286, Glu434, and Glu478.

It belongs to the peptidase M24B family. Mn(2+) is required as a cofactor.

It carries out the reaction Release of any N-terminal amino acid, including proline, that is linked to proline, even from a dipeptide or tripeptide.. In terms of biological role, catalyzes the removal of a penultimate prolyl residue from the N-termini of peptides. The protein is Probable Xaa-Pro aminopeptidase TRV_02643 of Trichophyton verrucosum (strain HKI 0517).